We begin with the raw amino-acid sequence, 155 residues long: MLYRDPYEFLKSIPKDKCIMCLDMGEKQIGIAFSDKTQLIATAHSVYYRKNISKDLGYLNRIFKKNEAGSIVIGLPLEIDGQKSEWCKTIIKFANKMIKKYKVSTYLQDESLSTSIAAHTLKISGVSTTKSKRIDDKISACIILQRTLDKINVIK.

The protein belongs to the YqgF nuclease family.

The protein localises to the cytoplasm. Functionally, could be a nuclease involved in processing of the 5'-end of pre-16S rRNA. The polypeptide is Putative pre-16S rRNA nuclease (Wolbachia sp. subsp. Brugia malayi (strain TRS)).